Consider the following 191-residue polypeptide: UPF0312 protein Shewmr7_1249 (191 aa).

The signal sequence occupies residues 1–22 (MKKQLLAALIGGFLLAPMAASA).

This sequence belongs to the UPF0312 family. Type 1 subfamily.

Its subcellular location is the periplasm. The chain is UPF0312 protein Shewmr7_1249 from Shewanella sp. (strain MR-7).